We begin with the raw amino-acid sequence, 1207 residues long: Histidine kinase 1 (1207 aa).

Residues 1 to 10 (MRGDSFSMSI) are compositionally biased toward polar residues. A disordered region spans residues 1–20 (MRGDSFSMSIENLPDSPMGS). Residues 1-81 (MRGDSFSMSI…SSYYSVFVVR (81 aa)) lie on the Cytoplasmic side of the membrane. The helical transmembrane segment at 82–102 (LAIMVMLAILIGLLTVLTWHF) threads the bilayer. Residues 103–446 (TRIYTKQSLQ…GKVDERAFKT (344 aa)) are Extracellular-facing. A helical membrane pass occupies residues 447–467 (LIILISASVCIFFIGCVCILI). Residues 468-1207 (LTNGVSKEMK…PSAFQTSLSA (740 aa)) are Cytoplasmic-facing. The Histidine kinase domain occupies 505 to 763 (NMSHELRTPM…LMRLYLILST (259 aa)). Residue His-508 is modified to Phosphohistidine; by autocatalysis. Disordered stretches follow at residues 964–987 (DTCS…VKPS) and 1000–1021 (DATT…PEEE). Over residues 975 to 984 (SGEKQVDKSV) the composition is skewed to basic and acidic residues. The span at 1000–1014 (DATTSNDDSTSASMT) shows a compositional bias: low complexity. Positions 1045 to 1196 (RILLAEDTPV…LMVSTILSLT (152 aa)) constitute a Response regulatory domain. Asp-1127 carries the 4-aspartylphosphate modification.

In terms of assembly, interacts with AHP2, depending of the phosphorylation state of Asp-1075 in the receiver domain, but probably not with AHP1 and AHP3. In terms of processing, autophosphorylated predominantly on His residues. Activation probably requires a transfer of a phosphate group between a His in the transmitter domain and an Asp of the receiver domain. In terms of tissue distribution, mostly expressed in roots, and, to a lower extent, in stems, leaves and flowers.

Its subcellular location is the cell membrane. The enzyme catalyses ATP + protein L-histidine = ADP + protein N-phospho-L-histidine.. Its function is as follows. Functions as an osmosensor histidine kinase that detects water stress and transmits the stress signal to a downstream MAPK cascade. This protein undergoes an ATP-dependent autophosphorylation at a conserved histidine residue in the kinase core, and a phosphoryl group is then transferred to a conserved aspartate residue in the receiver domain. Positive regulator of drought and salt stress responses, and abscisic acid (ABA) signaling. Confers drought tolerance, probably by regulating levels of ABA accumulation. Plays a redundant role in regulating plant growth and development. Required for the regulation of desiccation processes during seed formation. This is Histidine kinase 1 (AHK1) from Arabidopsis thaliana (Mouse-ear cress).